The primary structure comprises 346 residues: Protein tas (346 aa).

The Proton donor role is filled by Tyr53. 234 to 244 (SCLGFGTLTGK) serves as a coordination point for NADP(+).

Belongs to the aldo/keto reductase family. Aldo/keto reductase 2 subfamily.

This is Protein tas (tas) from Escherichia coli (strain K12).